Consider the following 289-residue polypeptide: Iron-sulfur cluster carrier protein (289 aa).

The segment covering 1–18 (MAEECSGNCDSCGSSSDC) has biased composition (low complexity). Residues 1–20 (MAEECSGNCDSCGSSSDCSD) form a disordered region. Position 48–55 (48–55 (GKGGVGKS)) interacts with ATP.

It belongs to the Mrp/NBP35 ATP-binding proteins family. As to quaternary structure, homodimer.

In terms of biological role, binds and transfers iron-sulfur (Fe-S) clusters to target apoproteins. Can hydrolyze ATP. The polypeptide is Iron-sulfur cluster carrier protein (Methanococcus maripaludis (strain DSM 14266 / JCM 13030 / NBRC 101832 / S2 / LL)).